The following is a 1442-amino-acid chain: Death-associated protein kinase 1 (1442 aa).

Positions 13 to 275 (YDTGEELGSG…IQDSLQHPWI (263 aa)) constitute a Protein kinase domain. Residues 19-27 (LGSGQFAVV) and lysine 42 contribute to the ATP site. The Proton acceptor role is filled by aspartate 139. Residues 267 to 334 (QDSLQHPWIK…RSNMSVARSD (68 aa)) form a calmodulin-binding region. Serine 289 is subject to Phosphoserine; by RPS6KA1 and RPS6KA3. Residues 292–301 (NMEKFKKFAA) are autoinhibitory domain. Serine 308 carries the phosphoserine; by autocatalysis modification. 2 positions are modified to phosphoserine: serine 319 and serine 333. ANK repeat units lie at residues 378-407 (HGTPPLLIAAGCGNIQMLQLLIKRGSRIDV), 411-440 (GGSNAIYWASRHGHVDTLKFLNENKCPLDV), 444-473 (SGETALHVAARYGHADVVQLLCSFGSNPDF), 477-506 (EEETPLHCAAWHGYYSVAKALCEVGCNVNI), 510-539 (EGETPLLTASARGYHDIVECLAEHGADLNA), 543-572 (DGHIALHLAVRRCQMEVIKTLLGHGSFVDF), 576-605 (HGNTPLHVACKDGSAPIVVALCEASCNLDI), and 609-638 (YGRTPLHLAANNGILDVVRYLCLMGANVEA). In terms of domain architecture, Roc spans 681 to 955 (TQNLQPRIKL…NHLQEIRSQI (275 aa)). The residue at position 734 (serine 734) is a Phosphoserine; by MAPK1. An ANK 9 repeat occupies 875-904 (KLKNPLRVVLVATHADIMNIPRPAGGEFGY). The residue at position 1115 (serine 1115) is a Phosphoserine. The stretch at 1164–1196 (DADIRLWVSGCRIANRGAELLVLLVNHGQGIEV) is one ANK 10 repeat. Residues 1312 to 1396 (KLSRLLDPPD…DAADFLLKAS (85 aa)) enclose the Death domain. Residue serine 1433 is modified to Phosphoserine.

Belongs to the protein kinase superfamily. CAMK Ser/Thr protein kinase family. DAP kinase subfamily. Interacts with KLHL20. Interacts (via death domain) with MAPK1 and MAPK3. Interacts with MAP1B (via N-terminus). Interacts with PRKD1 in an oxidative stress-regulated manner. Interacts with PIN1, PDCD6, BECN1, TSC2 and STX1A. Interacts (via kinase domain) with DAPK3 (via kinase domain). Interacts with GRINB. Interacts (via death domain) with UNC5B (via death domain). Interacts with UNC5C (via death domain). Mg(2+) is required as a cofactor. Ubiquitinated by the BCR(KLHL20) E3 ubiquitin ligase complex, leading to its degradation by the proteasome. In terms of processing, in response to mitogenic stimulation (PMA or EGF), phosphorylated at Ser-289; phosphorylation suppresses DAPK1 pro-apoptotic function. Autophosphorylation at Ser-308 inhibits its catalytic activity. Phosphorylation at Ser-734 by MAPK1 increases its catalytic activity and promotes cytoplasmic retention of MAPK1. Endoplasmic-stress can cause dephosphorylation at Ser-308. In terms of tissue distribution, high levels in bladder, uterus, vas deferens, lung, liver and kidney.

It carries out the reaction L-seryl-[protein] + ATP = O-phospho-L-seryl-[protein] + ADP + H(+). The catalysed reaction is L-threonyl-[protein] + ATP = O-phospho-L-threonyl-[protein] + ADP + H(+). With respect to regulation, activated by Ca(2+)/calmodulin. Regulated by a locking mechanism, involving autophosphorylation at Ser-308 and calmodulin binding. In the inactive state, Ser-308 is phosphorylated. Activation involves its dephosphorylation and a release-of-autoinhibition mechanism where binding of calmodulin induces a conformational change that relieves the steric block of the active site by the autoinhibitory domain. Activity is modulated by UNC5B and NTN1. UNC5B activates it by inhibiting the phosphorylation at Ser-308, whereas NTN1 inhibits UNC5B-mediated activation of DAPK1. Endoplasmic-stress activates by causing Ser-308 dephosphorylation. Calcium/calmodulin-dependent serine/threonine kinase involved in multiple cellular signaling pathways that trigger cell survival, apoptosis, and autophagy. Regulates both type I apoptotic and type II autophagic cell deaths signal, depending on the cellular setting. The former is caspase-dependent, while the latter is caspase-independent and is characterized by the accumulation of autophagic vesicles. Phosphorylates PIN1 resulting in inhibition of its catalytic activity, nuclear localization, and cellular function. Phosphorylates TPM1, enhancing stress fiber formation in endothelial cells. Phosphorylates STX1A and significantly decreases its binding to STXBP1. Phosphorylates PRKD1 and regulates JNK signaling by binding and activating PRKD1 under oxidative stress. Phosphorylates BECN1, reducing its interaction with BCL2 and BCL2L1 and promoting the induction of autophagy. Phosphorylates TSC2, disrupting the TSC1-TSC2 complex and stimulating mTORC1 activity in a growth factor-dependent pathway. Phosphorylates RPS6, MYL9 and DAPK3. Acts as a signaling amplifier of NMDA receptors at extrasynaptic sites for mediating brain damage in stroke. Cerebral ischemia recruits DAPK1 into the NMDA receptor complex and it phosphorylates GRINB at Ser-1303 inducing injurious Ca(2+) influx through NMDA receptor channels, resulting in an irreversible neuronal death. Required together with DAPK3 for phosphorylation of RPL13A upon interferon-gamma activation which is causing RPL13A involvement in transcript-selective translation inhibition. In Mus musculus (Mouse), this protein is Death-associated protein kinase 1 (Dapk1).